A 75-amino-acid polypeptide reads, in one-letter code: Small ribosomal subunit protein bS18 (75 aa).

This sequence belongs to the bacterial ribosomal protein bS18 family. In terms of assembly, part of the 30S ribosomal subunit. Forms a tight heterodimer with protein bS6.

Functionally, binds as a heterodimer with protein bS6 to the central domain of the 16S rRNA, where it helps stabilize the platform of the 30S subunit. This chain is Small ribosomal subunit protein bS18, found in Anaplasma marginale (strain St. Maries).